The sequence spans 432 residues: Eukaryotic translation initiation factor 3 subunit M (432 aa).

The 173-residue stretch at 184–356 folds into the PCI domain; the sequence is EEEEAYQHIL…KVFLIHSVRY (173 aa). Basic and acidic residues-rich tracts occupy residues 392-401 and 423-432; these read AQQEAERKLV and QHRERNDNDD. Residues 392 to 432 form a disordered region; that stretch reads AQQEAERKLVEASTQHNNDRGNQRRGGNRGQQHRERNDNDD.

Belongs to the eIF-3 subunit M family. As to quaternary structure, component of the eukaryotic translation initiation factor 3 (eIF-3) complex.

The protein resides in the cytoplasm. Component of the eukaryotic translation initiation factor 3 (eIF-3) complex, which is involved in protein synthesis of a specialized repertoire of mRNAs and, together with other initiation factors, stimulates binding of mRNA and methionyl-tRNAi to the 40S ribosome. The eIF-3 complex specifically targets and initiates translation of a subset of mRNAs involved in cell proliferation. The chain is Eukaryotic translation initiation factor 3 subunit M from Pyricularia oryzae (strain 70-15 / ATCC MYA-4617 / FGSC 8958) (Rice blast fungus).